A 426-amino-acid polypeptide reads, in one-letter code: D-amino acid dehydrogenase (426 aa).

Residue 3 to 17 (VVVLGAGVIGVTTAW) coordinates FAD.

This sequence belongs to the DadA oxidoreductase family. FAD serves as cofactor.

It carries out the reaction a D-alpha-amino acid + A + H2O = a 2-oxocarboxylate + AH2 + NH4(+). The protein operates within amino-acid degradation; D-alanine degradation; NH(3) and pyruvate from D-alanine: step 1/1. Functionally, oxidative deamination of D-amino acids. The sequence is that of D-amino acid dehydrogenase from Phenylobacterium zucineum (strain HLK1).